The chain runs to 347 residues: MSKKIKVGIVGATGYTGVELLRLLAAHPDVEVAAVTSRSEAGTAVADYFPSLRGVYGLAFQTPDEAGLEQCDIVFFATPNGIAMKDAPRLIEQGVRVIDLSADFRIRDIPTWEHWYGMTHAAPDLVSQAVYGLSELNREAVAQARLVANPGCYPTCVSLPLVPLLRQCRLKPGMPLIADCKSGVSGAGRKGNVGSLLCEAGDNFKAYGIAGHRHLPEIRQTIAGLQDGIAEGFVFTPHLAPMIRGMHATVYLHLSDGSNPETVLRDYYRDSLFVDILPAGSTPETRSVRGANLCRISIQQAAQSDVWVVLSVIDNLVKGAAGQAVQNMNIMFGLKETHGLDAIPLLP.

Residue Cys152 is part of the active site.

The protein belongs to the NAGSA dehydrogenase family. Type 1 subfamily.

Its subcellular location is the cytoplasm. The enzyme catalyses N-acetyl-L-glutamate 5-semialdehyde + phosphate + NADP(+) = N-acetyl-L-glutamyl 5-phosphate + NADPH + H(+). It participates in amino-acid biosynthesis; L-arginine biosynthesis; N(2)-acetyl-L-ornithine from L-glutamate: step 3/4. Its function is as follows. Catalyzes the NADPH-dependent reduction of N-acetyl-5-glutamyl phosphate to yield N-acetyl-L-glutamate 5-semialdehyde. This chain is N-acetyl-gamma-glutamyl-phosphate reductase, found in Neisseria meningitidis serogroup C (strain 053442).